We begin with the raw amino-acid sequence, 615 residues long: 1-deoxy-D-xylulose-5-phosphate synthase (615 aa).

Thiamine diphosphate-binding positions include H72 and 111 to 113 (GHS). D142 provides a ligand contact to Mg(2+). Thiamine diphosphate is bound by residues 143–144 (GA), N171, Y278, and E360. N171 is a binding site for Mg(2+).

It belongs to the transketolase family. DXPS subfamily. As to quaternary structure, homodimer. Mg(2+) serves as cofactor. It depends on thiamine diphosphate as a cofactor.

The catalysed reaction is D-glyceraldehyde 3-phosphate + pyruvate + H(+) = 1-deoxy-D-xylulose 5-phosphate + CO2. The protein operates within metabolic intermediate biosynthesis; 1-deoxy-D-xylulose 5-phosphate biosynthesis; 1-deoxy-D-xylulose 5-phosphate from D-glyceraldehyde 3-phosphate and pyruvate: step 1/1. In terms of biological role, catalyzes the acyloin condensation reaction between C atoms 2 and 3 of pyruvate and glyceraldehyde 3-phosphate to yield 1-deoxy-D-xylulose-5-phosphate (DXP). This Campylobacter jejuni subsp. jejuni serotype O:6 (strain 81116 / NCTC 11828) protein is 1-deoxy-D-xylulose-5-phosphate synthase.